A 428-amino-acid polypeptide reads, in one-letter code: 3-phosphoshikimate 1-carboxyvinyltransferase (428 aa).

Lys22, Ser23, and Arg27 together coordinate 3-phosphoshikimate. Position 22 (Lys22) interacts with phosphoenolpyruvate. The phosphoenolpyruvate site is built by Gly96 and Arg124. 3-phosphoshikimate contacts are provided by Ser170, Ser171, Gln172, Ser198, Asp314, Asn337, and Lys341. Gln172 contributes to the phosphoenolpyruvate binding site. Asp314 (proton acceptor) is an active-site residue. 3 residues coordinate phosphoenolpyruvate: Arg345, Arg387, and Lys412.

Belongs to the EPSP synthase family. As to quaternary structure, monomer.

It is found in the cytoplasm. The enzyme catalyses 3-phosphoshikimate + phosphoenolpyruvate = 5-O-(1-carboxyvinyl)-3-phosphoshikimate + phosphate. It functions in the pathway metabolic intermediate biosynthesis; chorismate biosynthesis; chorismate from D-erythrose 4-phosphate and phosphoenolpyruvate: step 6/7. Catalyzes the transfer of the enolpyruvyl moiety of phosphoenolpyruvate (PEP) to the 5-hydroxyl of shikimate-3-phosphate (S3P) to produce enolpyruvyl shikimate-3-phosphate and inorganic phosphate. This Shewanella denitrificans (strain OS217 / ATCC BAA-1090 / DSM 15013) protein is 3-phosphoshikimate 1-carboxyvinyltransferase.